The sequence spans 201 residues: Recombination protein RecR (201 aa).

A C4-type zinc finger spans residues 60 to 75 (CSRCGNVDTVDPCTVC). The Toprim domain occupies 83–178 (SVIIVVEDVS…KITRLAHGVP (96 aa)).

The protein belongs to the RecR family.

Functionally, may play a role in DNA repair. It seems to be involved in an RecBC-independent recombinational process of DNA repair. It may act with RecF and RecO. The protein is Recombination protein RecR of Rhizobium etli (strain ATCC 51251 / DSM 11541 / JCM 21823 / NBRC 15573 / CFN 42).